The chain runs to 132 residues: NADH-quinone oxidoreductase subunit A 2 (132 aa).

3 helical membrane passes run 9-29 (AWAF…MLGL), 66-86 (LVAM…LWAV), and 93-113 (WAGF…LFYL).

This sequence belongs to the complex I subunit 3 family. As to quaternary structure, NDH-1 is composed of 13 different subunits. Subunits NuoA, H, J, K, L, M, N constitute the membrane sector of the complex.

The protein localises to the cell inner membrane. The enzyme catalyses a quinone + NADH + 5 H(+)(in) = a quinol + NAD(+) + 4 H(+)(out). Functionally, NDH-1 shuttles electrons from NADH, via FMN and iron-sulfur (Fe-S) centers, to quinones in the respiratory chain. The immediate electron acceptor for the enzyme in this species is believed to be ubiquinone. Couples the redox reaction to proton translocation (for every two electrons transferred, four hydrogen ions are translocated across the cytoplasmic membrane), and thus conserves the redox energy in a proton gradient. This is NADH-quinone oxidoreductase subunit A 2 from Pseudomonas paraeruginosa (strain DSM 24068 / PA7) (Pseudomonas aeruginosa (strain PA7)).